Reading from the N-terminus, the 73-residue chain is RNA-binding protein Hfq (73 aa).

The Sm domain maps to 8 to 68; that stretch reads DQFLNQIRKD…ISTFAPQKNV (61 aa).

Belongs to the Hfq family. In terms of assembly, homohexamer.

Its function is as follows. RNA chaperone that binds small regulatory RNA (sRNAs) and mRNAs to facilitate mRNA translational regulation in response to envelope stress, environmental stress and changes in metabolite concentrations. Also binds with high specificity to tRNAs. The chain is RNA-binding protein Hfq from Bacillus velezensis (strain DSM 23117 / BGSC 10A6 / LMG 26770 / FZB42) (Bacillus amyloliquefaciens subsp. plantarum).